Consider the following 176-residue polypeptide: Large ribosomal subunit protein uL10 (176 aa).

This sequence belongs to the universal ribosomal protein uL10 family. Part of the ribosomal stalk of the 50S ribosomal subunit. The N-terminus interacts with L11 and the large rRNA to form the base of the stalk. The C-terminus forms an elongated spine to which L12 dimers bind in a sequential fashion forming a multimeric L10(L12)X complex.

Forms part of the ribosomal stalk, playing a central role in the interaction of the ribosome with GTP-bound translation factors. This is Large ribosomal subunit protein uL10 from Hahella chejuensis (strain KCTC 2396).